Reading from the N-terminus, the 78-residue chain is Acyl carrier protein (78 aa).

Positions 2 to 77 constitute a Carrier domain; sequence SDIAERVKKI…DAIKFLEKNA (76 aa). Ser-37 bears the O-(pantetheine 4'-phosphoryl)serine mark.

It belongs to the acyl carrier protein (ACP) family. 4'-phosphopantetheine is transferred from CoA to a specific serine of apo-ACP by AcpS. This modification is essential for activity because fatty acids are bound in thioester linkage to the sulfhydryl of the prosthetic group.

Its subcellular location is the cytoplasm. The protein operates within lipid metabolism; fatty acid biosynthesis. Carrier of the growing fatty acid chain in fatty acid biosynthesis. The chain is Acyl carrier protein from Azorhizobium caulinodans (strain ATCC 43989 / DSM 5975 / JCM 20966 / LMG 6465 / NBRC 14845 / NCIMB 13405 / ORS 571).